A 120-amino-acid polypeptide reads, in one-letter code: Large ribosomal subunit protein bL19 (120 aa).

This sequence belongs to the bacterial ribosomal protein bL19 family.

This protein is located at the 30S-50S ribosomal subunit interface and may play a role in the structure and function of the aminoacyl-tRNA binding site. The protein is Large ribosomal subunit protein bL19 of Trichormus variabilis (strain ATCC 29413 / PCC 7937) (Anabaena variabilis).